Reading from the N-terminus, the 942-residue chain is AP-1 complex subunit beta (942 aa).

6 HEAT repeats span residues 45 to 82, 117 to 154, 156 to 193, 273 to 313, 384 to 421, and 458 to 495; these read KDVS…NHPD, NITE…VNPE, VENQ…VSKK, DVIR…KRPE, RASE…KYPN, and DNAH…KRPK. A disordered region spans residues 590–700; it reads GLRNKEEEDE…NDLSFLGGGG (111 aa). The segment covering 596–609 has biased composition (acidic residues); that stretch reads EEDEEEPDYVDDDN. Composition is skewed to low complexity over residues 613–645 and 664–677; these read QQGG…QQQP and NNNN…NNNN. Over residues 678–693 the composition is skewed to polar residues; it reads MYSPQPQQFNGNSNDL.

It belongs to the adaptor complexes large subunit family. In terms of assembly, adaptor protein complex 1 (AP-1) is a heterotetramer composed of two large adaptins (gamma-type subunit and beta-type subunit), a medium adaptin (mu-type subunit) and a small adaptin (sigma-type subunit).

The protein resides in the golgi apparatus. Its subcellular location is the trans-Golgi network. It localises to the cytoplasmic vesicle. It is found in the clathrin-coated vesicle membrane. In terms of biological role, subunit of clathrin-associated adaptor protein complex 1 that plays a role in protein sorting in the trans-Golgi network (TGN) and endosomes. The AP complexes mediate the recruitment of clathrin to membranes and the recognition of sorting signals within the cytosolic tails of transmembrane cargo molecules. Also involved in early steps of phagocytosis and macropinocytosis. This chain is AP-1 complex subunit beta (ap1b1), found in Dictyostelium discoideum (Social amoeba).